The primary structure comprises 300 residues: MRPETAIIEIHGQYRIHTEFYGNPAAQQTIILVNGSLSTTASFAQTVKYLQPHYNVVLYDQPYAGQSKPHNENHTPISKECEARILLELIERFRAEVVMSFSWGGVATLLALAQRPGRIRRAVVNSFSPQLNPAMLDYLHRGLDYLAACDRTQIGNLVNETIGRYLPQLFKRYNFRHVSSLDEHEYHQMHFHIREVLRLNADSYTESFAGIEIPMLFMNGELDIYTTPHEARQFGQLIRGAEFHTIRNAGHFIDVEHKAAWQQTQDALLAFLRPQRTQPLNPIYRPQPNGASVPLAALAS.

The region spanning 29-253 is the AB hydrolase-1 domain; the sequence is TIILVNGSLS…HTIRNAGHFI (225 aa).

It functions in the pathway polyester biosynthesis; polyhydroxyalkanoate biosynthesis. Catalyzes the transfer of the acyl moiety from in vitro synthesized 3-hydroxydecanoyl-CoA to acyl carrier protein. In Pseudomonas aeruginosa (strain ATCC 15692 / DSM 22644 / CIP 104116 / JCM 14847 / LMG 12228 / 1C / PRS 101 / PAO1), this protein is (R)-3-hydroxydecanoyl-ACP:CoA transacylase (phaG).